Consider the following 445-residue polypeptide: UDP-N-acetylmuramoylalanine--D-glutamate ligase (445 aa).

An ATP-binding site is contributed by 117 to 123 (GSNGKTT).

The protein belongs to the MurCDEF family.

The protein resides in the cytoplasm. The enzyme catalyses UDP-N-acetyl-alpha-D-muramoyl-L-alanine + D-glutamate + ATP = UDP-N-acetyl-alpha-D-muramoyl-L-alanyl-D-glutamate + ADP + phosphate + H(+). It participates in cell wall biogenesis; peptidoglycan biosynthesis. Functionally, cell wall formation. Catalyzes the addition of glutamate to the nucleotide precursor UDP-N-acetylmuramoyl-L-alanine (UMA). This chain is UDP-N-acetylmuramoylalanine--D-glutamate ligase, found in Neisseria gonorrhoeae (strain NCCP11945).